The primary structure comprises 236 residues: Purine nucleoside phosphorylase CA_C1699 (236 aa).

Zn(2+) is bound by residues His-62, Cys-97, and His-114.

This sequence belongs to the purine nucleoside phosphorylase YfiH/LACC1 family. Homodimer. Requires Cu(2+) as cofactor. It depends on Zn(2+) as a cofactor.

It catalyses the reaction adenosine + phosphate = alpha-D-ribose 1-phosphate + adenine. The catalysed reaction is S-methyl-5'-thioadenosine + phosphate = 5-(methylsulfanyl)-alpha-D-ribose 1-phosphate + adenine. The enzyme catalyses inosine + phosphate = alpha-D-ribose 1-phosphate + hypoxanthine. It carries out the reaction adenosine + H2O + H(+) = inosine + NH4(+). Its function is as follows. Purine nucleoside enzyme that catalyzes the phosphorolysis of adenosine and inosine nucleosides, yielding D-ribose 1-phosphate and the respective free bases, adenine and hypoxanthine. Also catalyzes the phosphorolysis of S-methyl-5'-thioadenosine into adenine and S-methyl-5-thio-alpha-D-ribose 1-phosphate. Also has adenosine deaminase activity. The protein is Purine nucleoside phosphorylase CA_C1699 of Clostridium acetobutylicum (strain ATCC 824 / DSM 792 / JCM 1419 / IAM 19013 / LMG 5710 / NBRC 13948 / NRRL B-527 / VKM B-1787 / 2291 / W).